The sequence spans 446 residues: COBRA-like protein 1 (446 aa).

A signal peptide spans 1-28; that stretch reads MALLLLRMGVSVALLVAFFSSLIPSSEA. 9 N-linked (GlcNAc...) asparagine glycosylation sites follow: N37, N162, N170, N209, N234, N316, N331, N350, and N419. Residue A420 is the site of GPI-anchor amidated alanine attachment. The propeptide at 421–446 is removed in mature form; that stretch reads STRVMSSILLPFITIWTALTFLMVYA.

The protein belongs to the COBRA family.

It localises to the cell membrane. In terms of biological role, involved in determining the orientation of cell expansion, probably by playing an important role in cellulose deposition. May act by recruiting cellulose synthesizing complexes to discrete positions on the cell surface. The polypeptide is COBRA-like protein 1 (BC1L6) (Oryza sativa subsp. japonica (Rice)).